Reading from the N-terminus, the 275-residue chain is Exosome complex component RRP40 (275 aa).

The residue at position 2 (Ala2) is an N-acetylalanine. Residue Lys151 forms a Glycyl lysine isopeptide (Lys-Gly) (interchain with G-Cter in SUMO2) linkage.

Belongs to the RRP40 family. In terms of assembly, component of the RNA exosome core complex (Exo-9), composed of EXOSC1, EXOSC2, EXOSC3, EXOSC4, EXOSC5, EXOSC6, EXOSC7, EXOSC8 and EXOSC9; within the complex interacts with EXOSC5 and EXOSC9. The catalytically inactive RNA exosome core complex (Exo-9) associates with the catalytic subunit EXOSC10/RRP6. Exo-9 may associate with DIS3 to form the nucleolar exosome complex, or DIS3L to form the cytoplasmic exosome complex. Exo-9 is formed by a hexameric base ring consisting of the heterodimers EXOSC4-EXOSC9, EXOSC5-EXOSC8 and EXOSC6-EXOSC7, and a cap ring consisting of EXOSC1, EXOSC2 and EXOSC3. The RNA exosome complex associates with cofactors C1D/RRP47, MPHOSPH6/MPP6 and MTREX/MTR4. Interacts with MPHOSPH6/MPP6; the interaction is direct. Interacts with GTPBP1. Interacts with ZC3HAV1. Interacts with DDX17 only in the presence of ZC3HAV1 in an RNA-independent manner. Interacts with DHX36; this interaction occurs in a RNase-insensitive manner. Interacts with HBS1L isoform 2.

It is found in the cytoplasm. It localises to the nucleus. Its subcellular location is the nucleolus. In terms of biological role, non-catalytic component of the RNA exosome complex which has 3'-&gt;5' exoribonuclease activity and participates in a multitude of cellular RNA processing and degradation events. In the nucleus, the RNA exosome complex is involved in proper maturation of stable RNA species such as rRNA, snRNA and snoRNA, in the elimination of RNA processing by-products and non-coding 'pervasive' transcripts, such as antisense RNA species and promoter-upstream transcripts (PROMPTs), and of mRNAs with processing defects, thereby limiting or excluding their export to the cytoplasm. The RNA exosome may be involved in Ig class switch recombination (CSR) and/or Ig variable region somatic hypermutation (SHM) by targeting AICDA deamination activity to transcribed dsDNA substrates. In the cytoplasm, the RNA exosome complex is involved in general mRNA turnover and specifically degrades inherently unstable mRNAs containing AU-rich elements (AREs) within their 3' untranslated regions, and in RNA surveillance pathways, preventing translation of aberrant mRNAs. It seems to be involved in degradation of histone mRNA. The catalytic inactive RNA exosome core complex of 9 subunits (Exo-9) is proposed to play a pivotal role in the binding and presentation of RNA for ribonucleolysis, and to serve as a scaffold for the association with catalytic subunits and accessory proteins or complexes. EXOSC3 as peripheral part of the Exo-9 complex stabilizes the hexameric ring of RNase PH-domain subunits through contacts with EXOSC9 and EXOSC5. The polypeptide is Exosome complex component RRP40 (EXOSC3) (Homo sapiens (Human)).